A 357-amino-acid chain; its full sequence is Membrane-bound lytic murein transglycosylase C (357 aa).

The N-terminal stretch at 1 to 16 (MKKLLALFVIAPILIS) is a signal peptide. C17 carries the N-palmitoyl cysteine lipid modification. C17 carries the S-diacylglycerol cysteine lipid modification.

It belongs to the transglycosylase Slt family.

The protein localises to the cell outer membrane. The catalysed reaction is Exolytic cleavage of the (1-&gt;4)-beta-glycosidic linkage between N-acetylmuramic acid (MurNAc) and N-acetylglucosamine (GlcNAc) residues in peptidoglycan, from either the reducing or the non-reducing ends of the peptidoglycan chains, with concomitant formation of a 1,6-anhydrobond in the MurNAc residue.. In terms of biological role, murein-degrading enzyme. May play a role in recycling of muropeptides during cell elongation and/or cell division. The sequence is that of Membrane-bound lytic murein transglycosylase C from Photorhabdus laumondii subsp. laumondii (strain DSM 15139 / CIP 105565 / TT01) (Photorhabdus luminescens subsp. laumondii).